The chain runs to 729 residues: Fatty acid oxidation complex subunit alpha (729 aa).

The segment at 1–189 is enoyl-CoA hydratase/isomerase; it reads MLYKGDTLYL…KIGLVDGVVK (189 aa). D296 lines the substrate pocket. Positions 311–729 are 3-hydroxyacyl-CoA dehydrogenase; it reads ETPKQAAVLG…ARPVGDLKTA (419 aa). Residues M324, D343, 400–402, K407, and S429 each bind NAD(+); that span reads VVE. H450 functions as the For 3-hydroxyacyl-CoA dehydrogenase activity in the catalytic mechanism. Position 453 (N453) interacts with NAD(+). Substrate is bound by residues N500 and Y660. The interval 707–729 is disordered; that stretch reads ARHNEPYYPPVEPARPVGDLKTA.

It in the N-terminal section; belongs to the enoyl-CoA hydratase/isomerase family. In the C-terminal section; belongs to the 3-hydroxyacyl-CoA dehydrogenase family. As to quaternary structure, heterotetramer of two alpha chains (FadB) and two beta chains (FadA).

The catalysed reaction is a (3S)-3-hydroxyacyl-CoA + NAD(+) = a 3-oxoacyl-CoA + NADH + H(+). It catalyses the reaction a (3S)-3-hydroxyacyl-CoA = a (2E)-enoyl-CoA + H2O. The enzyme catalyses a 4-saturated-(3S)-3-hydroxyacyl-CoA = a (3E)-enoyl-CoA + H2O. It carries out the reaction (3S)-3-hydroxybutanoyl-CoA = (3R)-3-hydroxybutanoyl-CoA. The catalysed reaction is a (3Z)-enoyl-CoA = a 4-saturated (2E)-enoyl-CoA. It catalyses the reaction a (3E)-enoyl-CoA = a 4-saturated (2E)-enoyl-CoA. It participates in lipid metabolism; fatty acid beta-oxidation. In terms of biological role, involved in the aerobic and anaerobic degradation of long-chain fatty acids via beta-oxidation cycle. Catalyzes the formation of 3-oxoacyl-CoA from enoyl-CoA via L-3-hydroxyacyl-CoA. It can also use D-3-hydroxyacyl-CoA and cis-3-enoyl-CoA as substrate. This Escherichia coli O6:K15:H31 (strain 536 / UPEC) protein is Fatty acid oxidation complex subunit alpha.